Reading from the N-terminus, the 697-residue chain is Elongation factor G (697 aa).

The tr-type G domain maps to 8–283 (ERCRNIGIMA…AVVDYLPSPL (276 aa)). Residues 17-24 (AHIDAGKT), 81-85 (DTPGH), and 135-138 (NKID) contribute to the GTP site.

It belongs to the TRAFAC class translation factor GTPase superfamily. Classic translation factor GTPase family. EF-G/EF-2 subfamily.

It localises to the cytoplasm. Functionally, catalyzes the GTP-dependent ribosomal translocation step during translation elongation. During this step, the ribosome changes from the pre-translocational (PRE) to the post-translocational (POST) state as the newly formed A-site-bound peptidyl-tRNA and P-site-bound deacylated tRNA move to the P and E sites, respectively. Catalyzes the coordinated movement of the two tRNA molecules, the mRNA and conformational changes in the ribosome. This Koribacter versatilis (strain Ellin345) protein is Elongation factor G.